The chain runs to 315 residues: MSESLRIIFAGTPDFAARHLDALLSSGHNVVGVFTQPDRPAGRGKKLMPSPVKVLAEEKGLPVFQPVSLRPQENQQLVADLQADVMVVVAYGLILPKAVLEMPRLGCINVHGSLLPRWRGAAPIQRSLWAGDAETGVTIMQMDVGLDTGDMLYKLSSPITAEDTSGTLYDKLAELGPQGLITTLKQLADGTAKPEVQDETLVTYAEKLSKEEARIDWSLSAAQLERCIRAFNPWPMSWLEIEGQPVKVWKASVIDTVTKSAPGTILEASKQGIQVATGDGILNLLSLQPAGKKAMSAQDLLNSRREWFVPGNRLA.

Residue 113 to 116 coordinates (6S)-5,6,7,8-tetrahydrofolate; the sequence is SLLP.

The protein belongs to the Fmt family.

The enzyme catalyses L-methionyl-tRNA(fMet) + (6R)-10-formyltetrahydrofolate = N-formyl-L-methionyl-tRNA(fMet) + (6S)-5,6,7,8-tetrahydrofolate + H(+). Functionally, attaches a formyl group to the free amino group of methionyl-tRNA(fMet). The formyl group appears to play a dual role in the initiator identity of N-formylmethionyl-tRNA by promoting its recognition by IF2 and preventing the misappropriation of this tRNA by the elongation apparatus. The protein is Methionyl-tRNA formyltransferase of Escherichia coli (strain SMS-3-5 / SECEC).